We begin with the raw amino-acid sequence, 312 residues long: Beta-ketoacyl-[acyl-carrier-protein] synthase III (312 aa).

Active-site residues include Cys112 and His237. An ACP-binding region spans residues 238–242 (QANIR). Asn267 is a catalytic residue.

Belongs to the thiolase-like superfamily. FabH family. Homodimer.

The protein localises to the cytoplasm. The enzyme catalyses (2S)-2-methylbutanoyl-CoA + malonyl-[ACP] + H(+) = (4S)-4-methyl-3-oxohexanoyl-[ACP] + CO2 + CoA. It carries out the reaction 2-methylpropanoyl-CoA + malonyl-[ACP] + H(+) = 4-methyl-3-oxopentanoyl-[ACP] + CO2 + CoA. It catalyses the reaction 3-methylbutanoyl-CoA + malonyl-[ACP] + H(+) = 5-methyl-3-oxohexanoyl-[ACP] + CO2 + CoA. The catalysed reaction is malonyl-[ACP] + acetyl-CoA + H(+) = 3-oxobutanoyl-[ACP] + CO2 + CoA. It functions in the pathway lipid metabolism; fatty acid biosynthesis. Its function is as follows. Catalyzes the condensation reaction of fatty acid synthesis by the addition to an acyl acceptor of two carbons from malonyl-ACP. Catalyzes the first condensation reaction which initiates fatty acid synthesis and may therefore play a role in governing the total rate of fatty acid production. Possesses both acetoacetyl-ACP synthase and acetyl transacylase activities. Can use branched-chain acyl-CoAs, with a preference for 2-methylbutanoyl-CoA, the precursor of odd-numbered anteiso fatty acids, at 30 degrees Celsius, which is further increased at a low temperature. Shows weak activity with acetyl-CoA. The polypeptide is Beta-ketoacyl-[acyl-carrier-protein] synthase III (Listeria monocytogenes serotype 1/2a (strain 10403S)).